A 473-amino-acid chain; its full sequence is Glutamate--tRNA ligase (473 aa).

The short motif at 11–21 is the 'HIGH' region element; it reads PSPTGFLHIGG. A 'KMSKS' region motif is present at residues 240 to 244; that stretch reads KLSKR. K243 lines the ATP pocket.

This sequence belongs to the class-I aminoacyl-tRNA synthetase family. Glutamate--tRNA ligase type 1 subfamily. As to quaternary structure, monomer.

It localises to the cytoplasm. It catalyses the reaction tRNA(Glu) + L-glutamate + ATP = L-glutamyl-tRNA(Glu) + AMP + diphosphate. Functionally, catalyzes the attachment of glutamate to tRNA(Glu) in a two-step reaction: glutamate is first activated by ATP to form Glu-AMP and then transferred to the acceptor end of tRNA(Glu). The protein is Glutamate--tRNA ligase of Rhodopseudomonas palustris (strain BisB5).